Here is a 433-residue protein sequence, read N- to C-terminus: Phosphomethylpyrimidine synthase 2 (433 aa).

Substrate contacts are provided by residues asparagine 66, methionine 94, tyrosine 123, histidine 162, 184 to 186 (SRG), 225 to 228 (DALR), and glutamate 264. Histidine 268 contacts Zn(2+). Substrate is bound at residue tyrosine 291. Histidine 332 lines the Zn(2+) pocket. Positions 408, 411, and 415 each coordinate [4Fe-4S] cluster.

This sequence belongs to the ThiC family. Requires [4Fe-4S] cluster as cofactor.

The catalysed reaction is 5-amino-1-(5-phospho-beta-D-ribosyl)imidazole + S-adenosyl-L-methionine = 4-amino-2-methyl-5-(phosphooxymethyl)pyrimidine + CO + 5'-deoxyadenosine + formate + L-methionine + 3 H(+). It participates in cofactor biosynthesis; thiamine diphosphate biosynthesis. In terms of biological role, catalyzes the synthesis of the hydroxymethylpyrimidine phosphate (HMP-P) moiety of thiamine from aminoimidazole ribotide (AIR) in a radical S-adenosyl-L-methionine (SAM)-dependent reaction. The chain is Phosphomethylpyrimidine synthase 2 from Saccharolobus solfataricus (strain ATCC 35092 / DSM 1617 / JCM 11322 / P2) (Sulfolobus solfataricus).